Consider the following 132-residue polypeptide: Fibroblast growth factor 1 (132 aa).

Heparin is bound by residues Asn10 and 108–120; that span reads KTKP…FGQK.

The protein belongs to the heparin-binding growth factors family.

It is found in the secreted. It localises to the cytoplasm. The protein localises to the cell cortex. Its subcellular location is the cytosol. The protein resides in the nucleus. Functionally, plays an important role in the regulation of cell survival, cell division, angiogenesis, cell differentiation and cell migration. Functions as a potent mitogen in vitro. Acts as a ligand for FGFR1 and integrins. Binds to FGFR1 in the presence of heparin leading to FGFR1 dimerization and activation via sequential autophosphorylation on tyrosine residues which act as docking sites for interacting proteins, leading to the activation of several signaling cascades. Binds to integrins. Its binding to integrins and subsequent ternary complex formation with integrins and FGFR1 are essential for FGF1 signaling. In Notophthalmus viridescens (Eastern newt), this protein is Fibroblast growth factor 1 (fgf1).